We begin with the raw amino-acid sequence, 103 residues long: MIGKEVTVQDIILELSEVQPEVLPVDLFCEEELPNEQETEEEPDNERISYKVIAPCGCRNCEVKLRIFVHATEFGIRAFQQLLTGDLQLLCPDCRGNCKHDGS.

Residues 1–48 (MIGKEVTVQDIILELSEVQPEVLPVDLFCEEELPNEQETEEEPDNERI) are E7 terminal domain. The LXCXE motif; interaction with host RB1 and TMEM173/STING signature appears at 27–31 (LFCEE). Residues 56–94 (CGCRNCEVKLRIFVHATEFGIRAFQQLLTGDLQLLCPDC) fold into a zinc finger. The Nuclear export signal signature appears at 76 to 84 (IRAFQQLLT).

It belongs to the papillomaviridae E7 protein family. Homodimer. Homooligomer. Interacts with host RB1; this interaction induces dissociation of RB1-E2F1 complex thereby disrupting RB1 activity. Interacts with host EP300; this interaction represses EP300 transcriptional activity. Interacts with protein E2; this interaction inhibits E7 oncogenic activity. Interacts with host TMEM173/STING; this interaction impairs the ability of TMEM173/STING to sense cytosolic DNA and promote the production of type I interferon (IFN-alpha and IFN-beta). Highly phosphorylated.

The protein localises to the host cytoplasm. It localises to the host nucleus. Its function is as follows. Plays a role in viral genome replication by driving entry of quiescent cells into the cell cycle. Stimulation of progression from G1 to S phase allows the virus to efficiently use the cellular DNA replicating machinery to achieve viral genome replication. E7 protein has both transforming and trans-activating activities. Induces the disassembly of the E2F1 transcription factor from RB1, with subsequent transcriptional activation of E2F1-regulated S-phase genes. Interferes with host histone deacetylation mediated by HDAC1 and HDAC2, leading to transcription activation. Also plays a role in the inhibition of both antiviral and antiproliferative functions of host interferon alpha. Interaction with host TMEM173/STING impairs the ability of TMEM173/STING to sense cytosolic DNA and promote the production of type I interferon (IFN-alpha and IFN-beta). The polypeptide is Protein E7 (Human papillomavirus 5).